The sequence spans 31 residues: Bacteriocin lactocin-705 (31 aa).

Its function is as follows. Antibacterial activity against several lactic acid bacteria, Listeria, Streptococci, etc. The polypeptide is Bacteriocin lactocin-705 (Lacticaseibacillus paracasei (Lactobacillus paracasei)).